Consider the following 387-residue polypeptide: Alkanesulfonate monooxygenase (387 aa).

This sequence belongs to the SsuD family.

It carries out the reaction an alkanesulfonate + FMNH2 + O2 = an aldehyde + FMN + sulfite + H2O + 2 H(+). Functionally, catalyzes the desulfonation of aliphatic sulfonates. This Ralstonia pickettii (strain 12J) protein is Alkanesulfonate monooxygenase.